The following is a 78-amino-acid chain: Acyl carrier protein (78 aa).

Residues 2–77 enclose the Carrier domain; the sequence is SDTEERVKKI…DAVKFIDKAS (76 aa). Ser-37 is modified (O-(pantetheine 4'-phosphoryl)serine).

This sequence belongs to the acyl carrier protein (ACP) family. Post-translationally, 4'-phosphopantetheine is transferred from CoA to a specific serine of apo-ACP by AcpS. This modification is essential for activity because fatty acids are bound in thioester linkage to the sulfhydryl of the prosthetic group.

Its subcellular location is the cytoplasm. It participates in lipid metabolism; fatty acid biosynthesis. Functionally, carrier of the growing fatty acid chain in fatty acid biosynthesis. The protein is Acyl carrier protein of Bartonella bacilliformis (strain ATCC 35685 / KC583 / Herrer 020/F12,63).